A 717-amino-acid polypeptide reads, in one-letter code: Photosystem I P700 chlorophyll a apoprotein A1 (717 aa).

A run of 8 helical transmembrane segments spans residues Val-58 to Ala-81, Leu-144 to His-167, Leu-183 to Leu-207, Ile-279 to Tyr-297, Trp-334 to Tyr-357, Leu-373 to Val-399, Ala-421 to His-443, and Phe-519 to Leu-537. [4Fe-4S] cluster-binding residues include Cys-561 and Cys-570. 2 consecutive transmembrane segments (helical) span residues His-577–Trp-598 and Leu-652–Phe-674. His-663 serves as a coordination point for chlorophyll a'. The chlorophyll a site is built by Met-671 and Tyr-679. Trp-680 provides a ligand contact to phylloquinone. A helical membrane pass occupies residues Ala-712–His-717.

It belongs to the PsaA/PsaB family. As to quaternary structure, the PsaA/B heterodimer binds the P700 chlorophyll special pair and subsequent electron acceptors. PSI consists of a core antenna complex that captures photons, and an electron transfer chain that converts photonic excitation into a charge separation. The eukaryotic PSI reaction center is composed of at least 11 subunits. P700 is a chlorophyll a/chlorophyll a' dimer, A0 is one or more chlorophyll a, A1 is one or both phylloquinones and FX is a shared 4Fe-4S iron-sulfur center. is required as a cofactor.

It localises to the plastid. Its subcellular location is the chloroplast thylakoid membrane. It catalyses the reaction reduced [plastocyanin] + hnu + oxidized [2Fe-2S]-[ferredoxin] = oxidized [plastocyanin] + reduced [2Fe-2S]-[ferredoxin]. In terms of biological role, psaA and PsaB bind P700, the primary electron donor of photosystem I (PSI), as well as the electron acceptors A0, A1 and FX. PSI is a plastocyanin-ferredoxin oxidoreductase, converting photonic excitation into a charge separation, which transfers an electron from the donor P700 chlorophyll pair to the spectroscopically characterized acceptors A0, A1, FX, FA and FB in turn. Oxidized P700 is reduced on the lumenal side of the thylakoid membrane by plastocyanin. In Drimys winteri (Winter's bark), this protein is Photosystem I P700 chlorophyll a apoprotein A1.